The following is a 138-amino-acid chain: Small ribosomal subunit protein uS11 (138 aa).

Belongs to the universal ribosomal protein uS11 family. As to quaternary structure, part of the 30S ribosomal subunit.

Its function is as follows. Located on the platform of the 30S subunit. The sequence is that of Small ribosomal subunit protein uS11 from Pyrobaculum arsenaticum (strain DSM 13514 / JCM 11321 / PZ6).